The following is a 334-amino-acid chain: Small ribosomal subunit protein uS2 (334 aa).

The protein belongs to the universal ribosomal protein uS2 family.

The chain is Small ribosomal subunit protein uS2 from Rhodopseudomonas palustris (strain BisB18).